The chain runs to 404 residues: Cysteine desulfurase IscS (404 aa).

Pyridoxal 5'-phosphate-binding positions include 75 to 76 (AT), Asn-155, Gln-183, and 203 to 205 (SGH). Lys-206 is modified (N6-(pyridoxal phosphate)lysine). Residue Thr-243 coordinates pyridoxal 5'-phosphate. The active-site Cysteine persulfide intermediate is Cys-328. Cys-328 contributes to the [2Fe-2S] cluster binding site.

This sequence belongs to the class-V pyridoxal-phosphate-dependent aminotransferase family. NifS/IscS subfamily. Homodimer. Forms a heterotetramer with IscU, interacts with other sulfur acceptors. Requires pyridoxal 5'-phosphate as cofactor.

It is found in the cytoplasm. The enzyme catalyses (sulfur carrier)-H + L-cysteine = (sulfur carrier)-SH + L-alanine. The protein operates within cofactor biosynthesis; iron-sulfur cluster biosynthesis. Its function is as follows. Master enzyme that delivers sulfur to a number of partners involved in Fe-S cluster assembly, tRNA modification or cofactor biosynthesis. Catalyzes the removal of elemental sulfur atoms from cysteine to produce alanine. Functions as a sulfur delivery protein for Fe-S cluster synthesis onto IscU, an Fe-S scaffold assembly protein, as well as other S acceptor proteins. This Serratia proteamaculans (strain 568) protein is Cysteine desulfurase IscS.